The primary structure comprises 205 residues: uncharacterized protein (205 aa).

The first 40 residues, 1–40, serve as a signal peptide directing secretion; the sequence is MSAGKSYRKKMKQRRMNMKISKYALGILMLSLVFVLSACG. A disordered region spans residues 44-82; sequence STKESTHDNHSDSSTHEEMDHSGSADVPEGLQESKNPKY. A compositionally biased stretch (basic and acidic residues) spans 47–66; sequence ESTHDNHSDSSTHEEMDHSG.

This is an uncharacterized protein from Bacillus subtilis (strain 168).